The chain runs to 564 residues: Dicarboxylate transporter 2, chloroplastic (564 aa).

The transit peptide at 1 to 22 (MESLALLPTLSLSTTTTTSKAT) directs the protein to the chloroplast. Residues 35 to 58 (RRPHLSLSLSSTPKPTLTFSSHSH) are disordered. Low complexity predominate over residues 39-58 (LSLSLSSTPKPTLTFSSHSH). 12 consecutive transmembrane segments (helical) span residues 94-114 (GAKL…RFAV), 127-147 (LLAI…PVGA), 166-186 (TAFC…FFFA), 235-255 (AGGI…SLPG), 262-282 (LGTY…ALFL), 307-327 (VFWL…TPLI), 356-376 (VTKN…LWVF), 380-400 (IGVS…LLGV), 415-435 (TLAW…LGIV), 451-471 (LSWP…HYLF), 484-504 (AFLA…LALA), and 538-558 (MGFI…GVWW).

Belongs to the SLC13A/DASS transporter (TC 2.A.47) family. DIT1 subfamily. In terms of tissue distribution, expressed in leaves.

It is found in the plastid. The protein localises to the chloroplast inner membrane. In terms of biological role, glutamate/malate translocator involved with DIT1 in primary ammonia assimilation and in the re-assimilation of ammonia generated by the photorespiratory pathway. Exports the end product of ammonia assimilation, glutamate, from plastids to the cytosol. The precursor for ammonia assimilation, 2-oxoglutarate, is imported from the cytosol by DIT1. The protein is Dicarboxylate transporter 2, chloroplastic (DIT2) of Spinacia oleracea (Spinach).